A 103-amino-acid polypeptide reads, in one-letter code: Large ribosomal subunit protein uL24 (103 aa).

The protein belongs to the universal ribosomal protein uL24 family. As to quaternary structure, part of the 50S ribosomal subunit.

One of two assembly initiator proteins, it binds directly to the 5'-end of the 23S rRNA, where it nucleates assembly of the 50S subunit. Its function is as follows. One of the proteins that surrounds the polypeptide exit tunnel on the outside of the subunit. This chain is Large ribosomal subunit protein uL24, found in Ruthia magnifica subsp. Calyptogena magnifica.